A 204-amino-acid chain; its full sequence is Dual specificity protein phosphatase 18 (204 aa).

The 142-residue stretch at 19–160 (GLSQITKSLF…LIHYEFQLFG (142 aa)) folds into the Tyrosine-protein phosphatase domain. The tract at residues 95–141 (MKQGRTLLHCAAGVSRSAALCLAYLMKYHVMSLLDAHAWTKSRRPII) is sufficient for mitochondrial localization. The active-site Phosphocysteine intermediate is the C104.

Belongs to the protein-tyrosine phosphatase family. Non-receptor class dual specificity subfamily.

The protein localises to the cytoplasm. It is found in the nucleus. The protein resides in the mitochondrion inner membrane. It carries out the reaction O-phospho-L-tyrosyl-[protein] + H2O = L-tyrosyl-[protein] + phosphate. The enzyme catalyses O-phospho-L-seryl-[protein] + H2O = L-seryl-[protein] + phosphate. It catalyses the reaction O-phospho-L-threonyl-[protein] + H2O = L-threonyl-[protein] + phosphate. In terms of biological role, can dephosphorylate single and diphosphorylated synthetic MAPK peptides, with preference for the phosphotyrosine and diphosphorylated forms over phosphothreonine. In vitro, dephosphorylates p-nitrophenyl phosphate (pNPP). The chain is Dual specificity protein phosphatase 18 (Dusp18) from Rattus norvegicus (Rat).